A 1090-amino-acid polypeptide reads, in one-letter code: UPF0507 protein SCRG_01893 (1090 aa).

The 148-residue stretch at 289–436 (FSVNQLLTDF…FEDFNKNTGN (148 aa)) folds into the VPS9 domain.

It belongs to the UPF0507 family.

The protein is UPF0507 protein SCRG_01893 of Saccharomyces cerevisiae (strain RM11-1a) (Baker's yeast).